Consider the following 640-residue polypeptide: ESX-3 secretion system protein EccA3 (640 aa).

393 to 400 (GPPGTGKT) is an ATP binding site.

It belongs to the CbxX/CfxQ family. In terms of assembly, part of the ESX-3 / type VII secretion system (T7SS), which is composed of cytosolic and membrane components.

Its subcellular location is the cytoplasm. Functionally, part of an ESX-3 / type VII specialized secretion system (T7SS), which exports several proteins. EccA3 exhibits ATPase activity and may provide energy for the export of ESX-3 substrates. In Mycobacterium leprae (strain TN), this protein is ESX-3 secretion system protein EccA3.